Reading from the N-terminus, the 357-residue chain is DNA integrity scanning protein DisA (357 aa).

A DAC domain is found at 8–146 (VKSMINILQL…GNLRYTLKDI (139 aa)). ATP is bound by residues G75, L93, and 106-110 (MRHRT).

Belongs to the DisA family. Homooctamer. It depends on Mg(2+) as a cofactor.

It catalyses the reaction 2 ATP = 3',3'-c-di-AMP + 2 diphosphate. Functionally, participates in a DNA-damage check-point that is active prior to asymmetric division when DNA is damaged. DisA forms globular foci that rapidly scan along the chromosomes during sporulation, searching for lesions. When a lesion is present, DisA pauses at the lesion site. This triggers a cellular response that culminates in a temporary block in sporulation initiation. Also has diadenylate cyclase activity, catalyzing the condensation of 2 ATP molecules into cyclic di-AMP (c-di-AMP). c-di-AMP acts as a signaling molecule that couples DNA integrity with progression of sporulation. The rise in c-di-AMP level generated by DisA while scanning the chromosome, operates as a positive signal that advances sporulation; upon encountering a lesion, the DisA focus arrests at the damaged site and halts c-di-AMP synthesis. The protein is DNA integrity scanning protein DisA of Bacillus cereus (strain ATCC 14579 / DSM 31 / CCUG 7414 / JCM 2152 / NBRC 15305 / NCIMB 9373 / NCTC 2599 / NRRL B-3711).